Here is a 71-residue protein sequence, read N- to C-terminus: Small ribosomal subunit protein bS21 (71 aa).

Positions 48–59 (KAAAAVKRHAKK) are enriched in basic residues. The interval 48–71 (KAAAAVKRHAKKVQREQRRRERLY) is disordered. Over residues 60–71 (VQREQRRRERLY) the composition is skewed to basic and acidic residues.

It belongs to the bacterial ribosomal protein bS21 family.

This chain is Small ribosomal subunit protein bS21, found in Azotobacter vinelandii (strain DJ / ATCC BAA-1303).